Here is a 653-residue protein sequence, read N- to C-terminus: Brain-enriched guanylate kinase-associated protein (653 aa).

Position 186 is a phosphotyrosine (tyrosine 186). Residues 241 to 271 (PGSLSSHLSEASAQDLGFPEGLEKPGSRPPY) are disordered. The span at 243–252 (SLSSHLSEAS) shows a compositional bias: polar residues. Residues serine 249, serine 278, serine 295, and serine 314 each carry the phosphoserine modification. The tract at residues 288–329 (RHQDRRPSVEGPGSDVGFLQAQNSTDSTAEEEEEEEEDTEAG) is disordered. Acidic residues predominate over residues 315–327 (TAEEEEEEEEDTE). Serine 400 and serine 427 each carry phosphoserine. The residue at position 435 (arginine 435) is an Asymmetric dimethylarginine. 8 positions are modified to phosphoserine: serine 523, serine 533, serine 535, serine 558, serine 560, serine 564, serine 613, and serine 623. The tract at residues 587 to 653 (GASGSPEPEL…KAQLYGTLLN (67 aa)) is disordered.

In terms of assembly, interacts with DLG4 and DLGAP1 and forms a ternary complex.

The protein resides in the cytoplasm. The protein localises to the membrane. May sustain the structure of the postsynaptic density (PSD). The protein is Brain-enriched guanylate kinase-associated protein (BEGAIN) of Ovis aries (Sheep).